Here is a 336-residue protein sequence, read N- to C-terminus: Mitochondrial import receptor subunit TOM40 homolog (336 aa).

Residues M1 to F58 are disordered. Residues P10–P21 are compositionally biased toward pro residues. Positions P42 to L52 are enriched in basic and acidic residues.

This sequence belongs to the Tom40 family. As to quaternary structure, forms part of the preprotein translocase complex of the outer mitochondrial membrane (TOM complex). Interacts with mitochondrial targeting sequences.

The protein resides in the mitochondrion outer membrane. Its function is as follows. Channel-forming protein essential for import of protein precursors into mitochondria. The protein is Mitochondrial import receptor subunit TOM40 homolog (tomm40) of Xenopus laevis (African clawed frog).